The chain runs to 275 residues: NH(3)-dependent NAD(+) synthetase (275 aa).

Position 46–53 (46–53) interacts with ATP; sequence GISGGQDS. Mg(2+) is bound at residue Asp-52. Arg-141 is a binding site for deamido-NAD(+). Thr-161 provides a ligand contact to ATP. Glu-166 contacts Mg(2+). Deamido-NAD(+) is bound by residues Lys-174 and Asp-181. Lys-190 and Thr-212 together coordinate ATP. Position 261-262 (261-262) interacts with deamido-NAD(+); sequence HK.

This sequence belongs to the NAD synthetase family. As to quaternary structure, homodimer.

It carries out the reaction deamido-NAD(+) + NH4(+) + ATP = AMP + diphosphate + NAD(+) + H(+). The protein operates within cofactor biosynthesis; NAD(+) biosynthesis; NAD(+) from deamido-NAD(+) (ammonia route): step 1/1. Its function is as follows. Catalyzes the ATP-dependent amidation of deamido-NAD to form NAD. Uses ammonia as a nitrogen source. The chain is NH(3)-dependent NAD(+) synthetase from Limosilactobacillus reuteri (strain DSM 20016) (Lactobacillus reuteri).